The chain runs to 221 residues: Large ribosomal subunit protein uL4 (221 aa).

The tract at residues 44-102 (AARQGTHKVKRRGEVRGGGKKPYRQKGTGRARQGSTRAPQFAGGGVVHGPTPRDYSQRT) is disordered. Basic residues predominate over residues 61–72 (GGKKPYRQKGTG).

This sequence belongs to the universal ribosomal protein uL4 family. Part of the 50S ribosomal subunit.

Its function is as follows. One of the primary rRNA binding proteins, this protein initially binds near the 5'-end of the 23S rRNA. It is important during the early stages of 50S assembly. It makes multiple contacts with different domains of the 23S rRNA in the assembled 50S subunit and ribosome. In terms of biological role, forms part of the polypeptide exit tunnel. This is Large ribosomal subunit protein uL4 from Streptomyces avermitilis (strain ATCC 31267 / DSM 46492 / JCM 5070 / NBRC 14893 / NCIMB 12804 / NRRL 8165 / MA-4680).